Here is a 323-residue protein sequence, read N- to C-terminus: MEKQVQMPEVELNSDHKMPLVGFGTCIPDPIPPLEELATIFLEVIKVGYRHFDTASCYGTEEALGKAVAQAIESGLVNGREEFFITSKLWVEDADQDLILPALKKTLGNLGLDYLDLYLIHMPLRLRQGAEMFKYTKEDFLPFDIKGTWKAMEECSKLGLCKSIGVSNYSCEKLSKLLENATILPAVNQVEMNVVWKQSKLLPFCKEKNIHVSAWSPLLSYGSIWSQNAVMENTVLVDIAASKSKTVAQVALRWIYEQGASFIMRTFNKERMYQNVQIFDWELTQEELDQIQQIPQRRSNLAEAFVHPEGPIKSVEELWDGDL.

D53 lines the NADP(+) pocket. Y58 acts as the Proton donor in catalysis. NADP(+)-binding positions include 167–168 (SN), Q189, 215–220 (WSPLLS), and 289–297 (DQIQQIPQR).

This sequence belongs to the aldo/keto reductase family. As to quaternary structure, monomer.

It carries out the reaction rhazimol + NADP(+) = rhazimal + NADPH + 2 H(+). It participates in alkaloid biosynthesis. Its function is as follows. Oxidoreductase involved in the biosynthesis of akuammilan monoterpene indole alkaloids (MIAs) natural products, components with various biological properties such as antidiabetic, antibacterial, anti-inflammatory, anticancer, and antimalarial activities. Catalyzes the conversion of rhazimal to rhazimol. This is Rhazimal reductase 2 from Alstonia scholaris (Dogbane).